A 384-amino-acid chain; its full sequence is Lipid-A-disaccharide synthase (384 aa).

This sequence belongs to the LpxB family.

The enzyme catalyses a lipid X + a UDP-2-N,3-O-bis[(3R)-3-hydroxyacyl]-alpha-D-glucosamine = a lipid A disaccharide + UDP + H(+). It participates in bacterial outer membrane biogenesis; LPS lipid A biosynthesis. Its function is as follows. Condensation of UDP-2,3-diacylglucosamine and 2,3-diacylglucosamine-1-phosphate to form lipid A disaccharide, a precursor of lipid A, a phosphorylated glycolipid that anchors the lipopolysaccharide to the outer membrane of the cell. In Geobacter sulfurreducens (strain ATCC 51573 / DSM 12127 / PCA), this protein is Lipid-A-disaccharide synthase.